A 678-amino-acid chain; its full sequence is Vitrin (678 aa).

The N-terminal stretch at Met-1–Ser-26 is a signal peptide. The region spanning Thr-40–Phe-133 is the LCCL domain. Disulfide bonds link Cys-46–Cys-62 and Cys-66–Cys-86. Residues Ser-154–Ala-168 show a composition bias toward polar residues. 2 disordered regions span residues Ser-154–Thr-177 and Thr-199–Phe-257. Residues Thr-199–Pro-216 are compositionally biased toward low complexity. Over residues Ser-230–Arg-240 the composition is skewed to polar residues. VWFA domains are found at residues Asp-293–Val-478 and Asp-495–Ile-668. Residues Asn-390 and Asn-520 are each glycosylated (N-linked (GlcNAc...) asparagine).

Binds dermatan sulfate and chondroitin sulfate.

Its subcellular location is the secreted. The protein localises to the extracellular space. The protein resides in the extracellular matrix. In terms of biological role, promotes matrix assembly and cell adhesiveness. Plays a role in spinal cord formation by regulating the proliferation and differentiation of neural stem cells. The sequence is that of Vitrin (VIT) from Homo sapiens (Human).